Reading from the N-terminus, the 170-residue chain is Acireductone dioxygenase (170 aa).

The Fe(2+) site is built by His99, His101, Glu105, and His144. Residues His99, His101, Glu105, and His144 each coordinate Ni(2+).

The protein belongs to the acireductone dioxygenase (ARD) family. As to quaternary structure, monomer. It depends on Fe(2+) as a cofactor. Ni(2+) is required as a cofactor.

It carries out the reaction 1,2-dihydroxy-5-(methylsulfanyl)pent-1-en-3-one + O2 = 3-(methylsulfanyl)propanoate + CO + formate + 2 H(+). It catalyses the reaction 1,2-dihydroxy-5-(methylsulfanyl)pent-1-en-3-one + O2 = 4-methylsulfanyl-2-oxobutanoate + formate + 2 H(+). The protein operates within amino-acid biosynthesis; L-methionine biosynthesis via salvage pathway; L-methionine from S-methyl-5-thio-alpha-D-ribose 1-phosphate: step 5/6. Catalyzes 2 different reactions between oxygen and the acireductone 1,2-dihydroxy-3-keto-5-methylthiopentene (DHK-MTPene) depending upon the metal bound in the active site. Fe-containing acireductone dioxygenase (Fe-ARD) produces formate and 2-keto-4-methylthiobutyrate (KMTB), the alpha-ketoacid precursor of methionine in the methionine recycle pathway. Ni-containing acireductone dioxygenase (Ni-ARD) produces methylthiopropionate, carbon monoxide and formate, and does not lie on the methionine recycle pathway. The chain is Acireductone dioxygenase from Bacillus cytotoxicus (strain DSM 22905 / CIP 110041 / 391-98 / NVH 391-98).